The chain runs to 338 residues: tRNA-specific 2-thiouridylase MnmA (338 aa).

Residues 6 to 13 (LMSGGIDS) and M32 contribute to the ATP site. The active-site Nucleophile is C87. The cysteines at positions 87 and 185 are disulfide-linked. Residue G111 coordinates ATP. Positions 135 to 137 (KDQ) are interaction with tRNA. The active-site Cysteine persulfide intermediate is C185. Residues 288–289 (RY) form an interaction with tRNA region.

Belongs to the MnmA/TRMU family.

Its subcellular location is the cytoplasm. It catalyses the reaction S-sulfanyl-L-cysteinyl-[protein] + uridine(34) in tRNA + AH2 + ATP = 2-thiouridine(34) in tRNA + L-cysteinyl-[protein] + A + AMP + diphosphate + H(+). Catalyzes the 2-thiolation of uridine at the wobble position (U34) of tRNA, leading to the formation of s(2)U34. In Syntrophomonas wolfei subsp. wolfei (strain DSM 2245B / Goettingen), this protein is tRNA-specific 2-thiouridylase MnmA.